The primary structure comprises 319 residues: ATP-dependent 6-phosphofructokinase (319 aa).

Residue G11 coordinates ATP. 21 to 25 (RAVVR) is a binding site for ADP. ATP contacts are provided by residues 72–73 (RC) and 102–105 (GDGS). D103 lines the Mg(2+) pocket. 125-127 (TID) is a substrate binding site. Catalysis depends on D127, which acts as the Proton acceptor. Residue R154 coordinates ADP. Substrate contacts are provided by residues R162 and 169-171 (MGR). Residues 185-187 (GAE), R211, and 213-215 (KKH) contribute to the ADP site. Residues E222, R243, and 249–252 (HMQR) each bind substrate.

Belongs to the phosphofructokinase type A (PFKA) family. ATP-dependent PFK group I subfamily. Prokaryotic clade 'B1' sub-subfamily. In terms of assembly, homotetramer. The cofactor is Mg(2+).

The protein localises to the cytoplasm. The enzyme catalyses beta-D-fructose 6-phosphate + ATP = beta-D-fructose 1,6-bisphosphate + ADP + H(+). The protein operates within carbohydrate degradation; glycolysis; D-glyceraldehyde 3-phosphate and glycerone phosphate from D-glucose: step 3/4. Its activity is regulated as follows. Allosterically activated by ADP and other diphosphonucleosides, and allosterically inhibited by phosphoenolpyruvate. Catalyzes the phosphorylation of D-fructose 6-phosphate to fructose 1,6-bisphosphate by ATP, the first committing step of glycolysis. This chain is ATP-dependent 6-phosphofructokinase, found in Macrococcus caseolyticus (strain JCSC5402) (Macrococcoides caseolyticum).